The chain runs to 732 residues: Cullin-3B (732 aa).

Residues Asp-662–Asp-724 enclose the Cullin neddylation domain. A Glycyl lysine isopeptide (Lys-Gly) (interchain with G-Cter in NEDD8) cross-link involves residue Lys-676.

This sequence belongs to the cullin family. In terms of assembly, interacts with BTB/POZ-MATH proteins BPM1 and BPM3. Neddylated. Deneddylated via its interaction with the COP9 signalosome (CSN) complex.

It functions in the pathway protein modification; protein ubiquitination. In terms of biological role, component of the cullin-RING ubiquitin ligases (CRL), or CUL3-RBX1-BTB protein E3 ligase complexes which mediate the ubiquitination and subsequent proteasomal degradation of target proteins. The functional specificity of the CRL complex depends on the BTB domain-containing protein as the substrate recognition component. Involved in embryo pattern formation and endosperm development. Required for the normal division and organization of the root stem cells and columella root cap cells. Regulates primary root growth by an unknown pathway, but in an ethylene-dependent manner. Functions in distal root patterning, by an ethylene-independent mechanism. Functionally redundant with CUL3A. This Arabidopsis thaliana (Mouse-ear cress) protein is Cullin-3B (CUL3B).